The chain runs to 114 residues: NADH-ubiquinone oxidoreductase chain 3 (114 aa).

A run of 3 helical transmembrane segments spans residues 3–23 (ATILMIAMTLSTILAILSFWL), 54–74 (FFLIAILFLLFDLEIALLLPF), and 85–105 (IVILWAALILTLLTLGLIYEW).

It belongs to the complex I subunit 3 family.

The protein resides in the mitochondrion membrane. It carries out the reaction a ubiquinone + NADH + 5 H(+)(in) = a ubiquinol + NAD(+) + 4 H(+)(out). Its function is as follows. Core subunit of the mitochondrial membrane respiratory chain NADH dehydrogenase (Complex I) that is believed to belong to the minimal assembly required for catalysis. Complex I functions in the transfer of electrons from NADH to the respiratory chain. The immediate electron acceptor for the enzyme is believed to be ubiquinone. This Xenopus laevis (African clawed frog) protein is NADH-ubiquinone oxidoreductase chain 3 (mt-nd3).